We begin with the raw amino-acid sequence, 430 residues long: Serine hydroxymethyltransferase (430 aa).

Residues Leu123 and 127–129 (GHL) each bind (6S)-5,6,7,8-tetrahydrofolate. Position 232 is an N6-(pyridoxal phosphate)lysine (Lys232). Residue Glu248 participates in (6S)-5,6,7,8-tetrahydrofolate binding.

The protein belongs to the SHMT family. Homodimer. Requires pyridoxal 5'-phosphate as cofactor.

It localises to the cytoplasm. The enzyme catalyses (6R)-5,10-methylene-5,6,7,8-tetrahydrofolate + glycine + H2O = (6S)-5,6,7,8-tetrahydrofolate + L-serine. It participates in one-carbon metabolism; tetrahydrofolate interconversion. Its pathway is amino-acid biosynthesis; glycine biosynthesis; glycine from L-serine: step 1/1. Its function is as follows. Catalyzes the reversible interconversion of serine and glycine with tetrahydrofolate (THF) serving as the one-carbon carrier. This reaction serves as the major source of one-carbon groups required for the biosynthesis of purines, thymidylate, methionine, and other important biomolecules. Also exhibits THF-independent aldolase activity toward beta-hydroxyamino acids, producing glycine and aldehydes, via a retro-aldol mechanism. The protein is Serine hydroxymethyltransferase of Anaplasma marginale (strain St. Maries).